A 325-amino-acid chain; its full sequence is Protein translocase subunit SecF (325 aa).

A run of 6 helical transmembrane segments spans residues 36 to 56 (GYIL…TKGF), 148 to 168 (LAQG…IYVG), 175 to 197 (LGFG…FSAL), 202 to 224 (DLTF…IVVF), 254 to 274 (TIIT…FGGP), and 281 to 301 (LALL…AIAI).

Belongs to the SecD/SecF family. SecF subfamily. As to quaternary structure, forms a complex with SecD. Part of the essential Sec protein translocation apparatus which comprises SecA, SecYEG and auxiliary proteins SecDF-YajC and YidC.

Its subcellular location is the cell inner membrane. Part of the Sec protein translocase complex. Interacts with the SecYEG preprotein conducting channel. SecDF uses the proton motive force (PMF) to complete protein translocation after the ATP-dependent function of SecA. This is Protein translocase subunit SecF from Haemophilus influenzae (strain ATCC 51907 / DSM 11121 / KW20 / Rd).